A 344-amino-acid polypeptide reads, in one-letter code: Lipase chaperone (344 aa).

Residues 14-34 traverse the membrane as a helical segment; it reads AMVYGVVGLAAIAGVAMWSGA.

It belongs to the lipase chaperone family.

The protein resides in the cell inner membrane. May be involved in the folding of the extracellular lipase during its passage through the periplasm. This is Lipase chaperone from Burkholderia lata (strain ATCC 17760 / DSM 23089 / LMG 22485 / NCIMB 9086 / R18194 / 383).